A 119-amino-acid polypeptide reads, in one-letter code: Cysteine-rich DPF motif domain-containing protein 1 (119 aa).

Belongs to the CDPF1 family.

This chain is Cysteine-rich DPF motif domain-containing protein 1 (Cdpf1), found in Mus musculus (Mouse).